A 335-amino-acid chain; its full sequence is Protein-arginine kinase (335 aa).

In terms of domain architecture, Phosphagen kinase C-terminal spans 20 to 243; that stretch reads IVMSSRIRLA…QQIINEEMQI (224 aa). ATP is bound by residues 23 to 27, His-81, Arg-114, 165 to 169, and 196 to 201; these read SSRIR, RASVM, and RGIYGE.

This sequence belongs to the ATP:guanido phosphotransferase family.

The catalysed reaction is L-arginyl-[protein] + ATP = N(omega)-phospho-L-arginyl-[protein] + ADP + H(+). Functionally, catalyzes the specific phosphorylation of arginine residues in proteins. The sequence is that of Protein-arginine kinase from Staphylococcus haemolyticus (strain JCSC1435).